The following is a 158-amino-acid chain: SsrA-binding protein (158 aa).

Residues 131–158 (KQLHDKRQTEKERDWNKQKQRILQTNQR) are disordered. Over residues 132 to 147 (QLHDKRQTEKERDWNK) the composition is skewed to basic and acidic residues.

The protein belongs to the SmpB family.

The protein resides in the cytoplasm. Its function is as follows. Required for rescue of stalled ribosomes mediated by trans-translation. Binds to transfer-messenger RNA (tmRNA), required for stable association of tmRNA with ribosomes. tmRNA and SmpB together mimic tRNA shape, replacing the anticodon stem-loop with SmpB. tmRNA is encoded by the ssrA gene; the 2 termini fold to resemble tRNA(Ala) and it encodes a 'tag peptide', a short internal open reading frame. During trans-translation Ala-aminoacylated tmRNA acts like a tRNA, entering the A-site of stalled ribosomes, displacing the stalled mRNA. The ribosome then switches to translate the ORF on the tmRNA; the nascent peptide is terminated with the 'tag peptide' encoded by the tmRNA and targeted for degradation. The ribosome is freed to recommence translation, which seems to be the essential function of trans-translation. The polypeptide is SsrA-binding protein (Teredinibacter turnerae (strain ATCC 39867 / T7901)).